The sequence spans 309 residues: Homoserine O-succinyltransferase (309 aa).

C142 functions as the Acyl-thioester intermediate in the catalytic mechanism. Substrate is bound by residues K163 and S192. H235 functions as the Proton acceptor in the catalytic mechanism. E237 is a catalytic residue. R249 is a binding site for substrate.

This sequence belongs to the MetA family. Homodimer.

It is found in the cytoplasm. It carries out the reaction L-homoserine + succinyl-CoA = O-succinyl-L-homoserine + CoA. Its pathway is amino-acid biosynthesis; L-methionine biosynthesis via de novo pathway; O-succinyl-L-homoserine from L-homoserine: step 1/1. In terms of biological role, transfers a succinyl group from succinyl-CoA to L-homoserine, forming succinyl-L-homoserine. This chain is Homoserine O-succinyltransferase, found in Escherichia fergusonii (strain ATCC 35469 / DSM 13698 / CCUG 18766 / IAM 14443 / JCM 21226 / LMG 7866 / NBRC 102419 / NCTC 12128 / CDC 0568-73).